A 424-amino-acid polypeptide reads, in one-letter code: UDP-N-acetylglucosamine 1-carboxyvinyltransferase (424 aa).

Lysine 22 to asparagine 23 provides a ligand contact to phosphoenolpyruvate. Arginine 93 is a UDP-N-acetyl-alpha-D-glucosamine binding site. Cysteine 117 functions as the Proton donor in the catalytic mechanism. Position 117 is a 2-(S-cysteinyl)pyruvic acid O-phosphothioketal (cysteine 117). Residues arginine 122–leucine 126, aspartate 307, and isoleucine 329 each bind UDP-N-acetyl-alpha-D-glucosamine.

Belongs to the EPSP synthase family. MurA subfamily.

Its subcellular location is the cytoplasm. It carries out the reaction phosphoenolpyruvate + UDP-N-acetyl-alpha-D-glucosamine = UDP-N-acetyl-3-O-(1-carboxyvinyl)-alpha-D-glucosamine + phosphate. It participates in cell wall biogenesis; peptidoglycan biosynthesis. Cell wall formation. Adds enolpyruvyl to UDP-N-acetylglucosamine. This Chlorobium phaeovibrioides (strain DSM 265 / 1930) (Prosthecochloris vibrioformis (strain DSM 265)) protein is UDP-N-acetylglucosamine 1-carboxyvinyltransferase.